Consider the following 282-residue polypeptide: Ribosome biogenesis GTPase A (282 aa).

The CP-type G domain maps to 14–178 (RREVTEKLKL…LLDTPGILWP (165 aa)). GTP contacts are provided by residues 58 to 61 (NKAD), 86 to 87 (NS), 130 to 135 (NVGKST), and Gly174.

The protein belongs to the TRAFAC class YlqF/YawG GTPase family. MTG1 subfamily. As to quaternary structure, interacts with ctc. Interacts with the immature 50S ribosome subunit. 2 molecules of rbgA bind to one 50S subunit.

The protein resides in the cytoplasm. In terms of biological role, essential protein that is required for a late step of 50S ribosomal subunit assembly. Has GTPase activity that is stimulated by interaction with the immature 50S ribosome subunit. Binds to the 23S rRNA. Required for the association of ribosomal proteins rplP and rpmA with the large subunit. In Bacillus spizizenii (strain ATCC 23059 / NRRL B-14472 / W23) (Bacillus subtilis subsp. spizizenii), this protein is Ribosome biogenesis GTPase A (rbgA).